We begin with the raw amino-acid sequence, 172 residues long: Transmembrane protein 91 (172 aa).

Disordered regions lie at residues 1–31 (MDSP…RHEL) and 55–83 (PSVS…DWDG). At 1-97 (MDSPSLRELQ…SPFLPHDHLG (97 aa)) the chain is on the extracellular side. Positions 69-81 (VEDMSSSDSDSDW) are enriched in acidic residues. Residues 98–118 (LAVFSMLCCFWPVGIAAFCLA) form a helical membrane-spanning segment. Residues 119–139 (QKTNKAWAKGDIQGAGAASRR) lie on the Cytoplasmic side of the membrane. A helical transmembrane segment spans residues 140-160 (AFLLGVLAVGLGVCTYAAALV). Over 161-172 (TLAAYLASRDPP) the chain is Extracellular.

It belongs to the CD225/Dispanin family.

It localises to the membrane. The sequence is that of Transmembrane protein 91 (TMEM91) from Homo sapiens (Human).